The primary structure comprises 188 residues: dITP/XTP pyrophosphatase (188 aa).

10–15 (TSNPHK) contacts substrate. Mg(2+) contacts are provided by Glu39 and Asp69. The Proton acceptor role is filled by Asp69. Residues Ser70, 145–148 (FGFD), Lys168, and 173–174 (HR) each bind substrate.

This sequence belongs to the HAM1 NTPase family. In terms of assembly, homodimer. Requires Mg(2+) as cofactor.

The catalysed reaction is XTP + H2O = XMP + diphosphate + H(+). It carries out the reaction dITP + H2O = dIMP + diphosphate + H(+). The enzyme catalyses ITP + H2O = IMP + diphosphate + H(+). Its function is as follows. Pyrophosphatase that catalyzes the hydrolysis of nucleoside triphosphates to their monophosphate derivatives, with a high preference for the non-canonical purine nucleotides XTP (xanthosine triphosphate), dITP (deoxyinosine triphosphate) and ITP. Seems to function as a house-cleaning enzyme that removes non-canonical purine nucleotides from the nucleotide pool, thus preventing their incorporation into DNA/RNA and avoiding chromosomal lesions. The chain is dITP/XTP pyrophosphatase from Ignicoccus hospitalis (strain KIN4/I / DSM 18386 / JCM 14125).